Here is a 197-residue protein sequence, read N- to C-terminus: SGTPSSTGTDGGYYYSWWTDGAGDATYQNNGGGSYTLTWSGNNGNLVGGKGWNPGAASRSISYSGTYQPNGNSYLSVYGWTRSSLIEYYIVESYGSYDPSSAASHKGSVTCNGATYDILSTWRYNAPSIDGTQTFEQFWSVRNPKKAPGGSISGTVDVQCHFDAWKGLGMNLGSEHNYQIVATEGYQSSGTATITVT.

The 197-residue stretch at serine 1–threonine 197 folds into the GH11 domain. Glutamate 87 acts as the Nucleophile in catalysis. An intrachain disulfide couples cysteine 111 to cysteine 160. Glutamate 184 functions as the Proton donor in the catalytic mechanism.

The protein belongs to the glycosyl hydrolase 11 (cellulase G) family.

The protein resides in the secreted. It carries out the reaction Endohydrolysis of (1-&gt;4)-beta-D-xylosidic linkages in xylans.. It participates in glycan degradation; xylan degradation. In terms of biological role, hydrolyzes xylans into xylobiose and xylose. This is Endo-1,4-beta-xylanase A (XYNA) from Schizophyllum commune (Split gill fungus).